A 130-amino-acid chain; its full sequence is Small ribosomal subunit protein uS9 (130 aa).

Basic and acidic residues predominate over residues 105–115; the sequence is TRDSRQVERKK. Positions 105-130 are disordered; the sequence is TRDSRQVERKKVGFRKSRKRTQFSKR. The segment covering 116–130 has biased composition (basic residues); the sequence is VGFRKSRKRTQFSKR.

It belongs to the universal ribosomal protein uS9 family.

The sequence is that of Small ribosomal subunit protein uS9 from Buchnera aphidicola subsp. Schizaphis graminum (strain Sg).